The chain runs to 666 residues: UvrABC system protein B (666 aa).

One can recognise a Helicase ATP-binding domain in the interval 28-171; the sequence is NNINQGIQRQ…YLHVGELIEF (144 aa). 41–48 contributes to the ATP binding site; it reads GATGTGKT. The short motif at 94-117 is the Beta-hairpin element; that stretch reads YFDYYQPEAYKPITDTYIEKDSVT. The region spanning 436-598 is the Helicase C-terminal domain; that stretch reads QIDDLINELM…IIPKTIIKPI (163 aa). Positions 624 to 659 constitute a UVR domain; that stretch reads NQKIKELKKKMEEAAKKREYEVAAQYRDMIVELEAI.

The protein belongs to the UvrB family. Forms a heterotetramer with UvrA during the search for lesions. Interacts with UvrC in an incision complex.

The protein localises to the cytoplasm. Functionally, the UvrABC repair system catalyzes the recognition and processing of DNA lesions. A damage recognition complex composed of 2 UvrA and 2 UvrB subunits scans DNA for abnormalities. Upon binding of the UvrA(2)B(2) complex to a putative damaged site, the DNA wraps around one UvrB monomer. DNA wrap is dependent on ATP binding by UvrB and probably causes local melting of the DNA helix, facilitating insertion of UvrB beta-hairpin between the DNA strands. Then UvrB probes one DNA strand for the presence of a lesion. If a lesion is found the UvrA subunits dissociate and the UvrB-DNA preincision complex is formed. This complex is subsequently bound by UvrC and the second UvrB is released. If no lesion is found, the DNA wraps around the other UvrB subunit that will check the other stand for damage. This chain is UvrABC system protein B, found in Ureaplasma parvum serovar 3 (strain ATCC 27815 / 27 / NCTC 11736).